The primary structure comprises 146 residues: Hemoglobin subunit beta (146 aa).

In terms of domain architecture, Globin spans 2-146 (HWTAEEKQLI…VAHALARKYH (145 aa)). Positions 63 and 92 each coordinate heme b.

It belongs to the globin family. Heterotetramer of two alpha chains and two beta chains. As to expression, red blood cells.

Functionally, involved in oxygen transport from the lung to the various peripheral tissues. The sequence is that of Hemoglobin subunit beta (HBB) from Aegypius monachus (Cinereous vulture).